A 353-amino-acid chain; its full sequence is Beta-agarase B (353 aa).

An N-terminal signal peptide occupies residues 1-17 (MYLIYLRLVFCCALLLG). A lipid anchor (N-palmitoyl cysteine) is attached at Cys-18. A lipid anchor (S-diacylglycerol cysteine) is attached at Cys-18. The tract at residues 30-58 (LPVEQEQEQETEQEGEPEESSEQDLVEEV) is disordered. A compositionally biased stretch (acidic residues) spans 32–58 (VEQEQEQETEQEGEPEESSEQDLVEEV). In terms of domain architecture, GH16 spans 58–353 (VDWKDIPVPA…WIRIYKPVEK (296 aa)). Substrate-binding positions include 105–107 (YHN) and Asp-181. The active-site Nucleophile is the Glu-184. Glu-189 acts as the Proton donor in catalysis. Residues His-215, Arg-219, Asp-224, Gln-226, and Glu-308 each coordinate substrate.

It belongs to the glycosyl hydrolase 16 family. Homodimer.

The protein resides in the cell outer membrane. The enzyme catalyses Hydrolysis of (1-&gt;4)-beta-D-galactosidic linkages in agarose, giving the tetramer as the predominant product.. Its function is as follows. Cleaves the beta-1,4-linkages between beta-D-galactose and alpha-L-3,6-anhydro-galactose residues in agarose. Cleaves agarose in a random manner with retention of the anomeric-bond configuration, producing beta-anomers that give rise progressively to alpha-anomers when mutarotation takes place. Also tolerant to hybrid substrates containing C6-sulfate groups at the -4, +1, and +3 positions. This is Beta-agarase B (agaB) from Zobellia galactanivorans (strain DSM 12802 / CCUG 47099 / CIP 106680 / NCIMB 13871 / Dsij).